The primary structure comprises 172 residues: Large ribosomal subunit protein uL10 (172 aa).

Belongs to the universal ribosomal protein uL10 family. In terms of assembly, part of the ribosomal stalk of the 50S ribosomal subunit. The N-terminus interacts with L11 and the large rRNA to form the base of the stalk. The C-terminus forms an elongated spine to which L12 dimers bind in a sequential fashion forming a multimeric L10(L12)X complex.

Forms part of the ribosomal stalk, playing a central role in the interaction of the ribosome with GTP-bound translation factors. The polypeptide is Large ribosomal subunit protein uL10 (rplJ) (Brucella abortus biovar 1 (strain 9-941)).